Here is a 162-residue protein sequence, read N- to C-terminus: Caveolin-2 (162 aa).

The Cytoplasmic segment spans residues 1–86; it reads MGLETEKADV…FEMSKYVIYK (86 aa). A Phosphotyrosine; by SRC modification is found at Tyr-19. 2 positions are modified to phosphoserine: Ser-20 and Ser-23. Tyr-27 carries the post-translational modification Phosphotyrosine; by SRC. Positions 87–107 form an intramembrane region, helical; it reads FLTVFLAIPLAFAAGILFATL. Topologically, residues 108-162 are cytoplasmic; it reads SCLHIWIIMPFVKTCLMVLPSVQTIWKSVTDVVIAPLCTSIGRSFSSVSLQLSHD.

It belongs to the caveolin family. In terms of assembly, monomer or homodimer. Interacts with CAV1; the interaction forms a stable heterooligomeric complex that is required for targeting to lipid rafts and for caveolae formation. Tyrosine phosphorylated forms do not form heterooligomers with the Tyr-19-phosphorylated form existing as a monomer or dimer, and the Tyr-27-form as a monomer only. Interacts (tyrosine phosphorylated form) with the SH2 domain-containing proteins, RASA1, NCK1 and SRC. Interacts (tyrosine phosphorylated form) with INSR, the interaction (Tyr-27-phosphorylated form) is increased on insulin stimulation. Interacts (Tyr-19 phosphorylated form) with MAPK1 (phosphorylated form); the interaction, promoted by insulin, leads to nuclear location and MAPK1 activation. Interacts with STAT3; the interaction is increased on insulin-induced tyrosine phosphorylation leading to STAT activation. Post-translationally, phosphorylated on serine and tyrosine residues. CAV1 promotes phosphorylation on Ser-23 which then targets the complex to the plasma membrane, lipid rafts and caveolae. Phosphorylation on both Tyr-19 and Tyr-27 is required for insulin-induced 'Ser-727' phosphorylation of STAT3 and its activation. Phosphorylation on Tyr-19 is required for insulin-induced phosphorylation of MAPK1 and DNA binding of STAT3. Tyrosine phosphorylation is induced by both EGF and insulin. Expressed in aortic endothelial cells.

It is found in the nucleus. The protein localises to the cytoplasm. It localises to the golgi apparatus membrane. The protein resides in the cell membrane. Its subcellular location is the membrane. It is found in the caveola. Functionally, may act as a scaffolding protein within caveolar membranes. Interacts directly with G-protein alpha subunits and can functionally regulate their activity. Acts as an accessory protein in conjunction with CAV1 in targeting to lipid rafts and driving caveolae formation. Positive regulator of cellular mitogenesis of the MAPK signaling pathway. Required for the insulin-stimulated nuclear translocation and activation of MAPK1 and STAT3, and the subsequent regulation of cell cycle progression. In Bos taurus (Bovine), this protein is Caveolin-2 (CAV2).